The primary structure comprises 445 residues: Exodeoxyribonuclease 7 large subunit (445 aa).

It belongs to the XseA family. As to quaternary structure, heterooligomer composed of large and small subunits.

It is found in the cytoplasm. It catalyses the reaction Exonucleolytic cleavage in either 5'- to 3'- or 3'- to 5'-direction to yield nucleoside 5'-phosphates.. In terms of biological role, bidirectionally degrades single-stranded DNA into large acid-insoluble oligonucleotides, which are then degraded further into small acid-soluble oligonucleotides. The sequence is that of Exodeoxyribonuclease 7 large subunit from Xanthomonas oryzae pv. oryzae (strain MAFF 311018).